Consider the following 133-residue polypeptide: Transcription antitermination protein NusB (133 aa).

Belongs to the NusB family.

In terms of biological role, involved in transcription antitermination. Required for transcription of ribosomal RNA (rRNA) genes. Binds specifically to the boxA antiterminator sequence of the ribosomal RNA (rrn) operons. The polypeptide is Transcription antitermination protein NusB (Clostridium botulinum (strain Alaska E43 / Type E3)).